A 330-amino-acid polypeptide reads, in one-letter code: Ubiquinone biosynthesis protein COQ4, mitochondrial (330 aa).

The N-terminal 31 residues, 1 to 31, are a transit peptide targeting the mitochondrion; sequence MLQSTKVTKSVLTNVLRVEQRRGFLLSGAAV. His-212, Asp-213, His-216, and Glu-228 together coordinate Zn(2+).

This sequence belongs to the COQ4 family. In terms of assembly, component of a multi-subunit COQ enzyme complex, composed of at least COQ3, COQ4, COQ5, COQ6, COQ7 and COQ9. Zn(2+) serves as cofactor.

It localises to the mitochondrion inner membrane. It carries out the reaction a 4-hydroxy-3-methoxy-5-(all-trans-polyprenyl)benzoate + H(+) = a 2-methoxy-6-(all-trans-polyprenyl)phenol + CO2. It participates in cofactor biosynthesis; ubiquinone biosynthesis. Its function is as follows. Lyase that catalyzes the C1-decarboxylation of 4-hydroxy-3-methoxy-5-(all-trans-polyprenyl)benzoic acid into 2-methoxy-6-(all-trans-polyprenyl)phenol during ubiquinone biosynthesis. The sequence is that of Ubiquinone biosynthesis protein COQ4, mitochondrial from Candida glabrata (strain ATCC 2001 / BCRC 20586 / JCM 3761 / NBRC 0622 / NRRL Y-65 / CBS 138) (Yeast).